The following is a 1383-amino-acid chain: Periaxin (1383 aa).

S7 is subject to Phosphoserine. The region spanning 16–99 is the PDZ domain; it reads LVEIIVETEA…YKVSFCLKRT (84 aa). The Nuclear export signal signature appears at 70–84; sequence VFFENFKYEDALRLL. S133 and S243 each carry phosphoserine. Tandem repeats lie at residues 432 to 436, 440 to 444, 448 to 452, 456 to 460, 461 to 465, 466 to 470, 474 to 478, 482 to 486, 487 to 491, 492 to 496, 497 to 501, 502 to 506, 507 to 511, 515 to 519, 523 to 527, 531 to 535, 536 to 540, 544 to 548, 549 to 553, 554 to 558, 562 to 566, 567 to 571, 575 to 579, 580 to 584, 585 to 589, 593 to 597, 601 to 605, 606 to 610, 611 to 615, 619 to 623, 627 to 631, 632 to 636, 637 to 641, 645 to 649, 653 to 657, 658 to 662, 663 to 667, 671 to 675, 676 to 680, 684 to 688, 689 to 693, 694 to 698, 699 to 703, 705 to 709, 713 to 717, and 718 to 722. Positions 432–722 are 46 X 5 AA approximate tandem repeats of [LVMGIE]-[PSM]-[EDKA]-[LIVMA]-[AQKHPRT]; that may have a tripeptide spacer of [ALKD]-[IPV]-[KPH]; it reads GPEVKAPKGP…VPEMKLPKVP (291 aa). Phosphoserine is present on residues S838, S971, S1020, S1271, S1275, S1277, S1285, S1323, and S1329. The segment at 1251 to 1383 is disordered; the sequence is KVKSPKLRLP…RIEGTQAAAI (133 aa). The span at 1267-1277 shows a compositional bias: low complexity; it reads SESASGEGSPS. Over residues 1346 to 1355 the composition is skewed to basic and acidic residues; the sequence is GSKDREEGGF. S1361 bears the Phosphoserine mark.

The protein belongs to the periaxin family. Homodimer (via PDZ domain). Interacts with SCN10A. Found in a complex with SCN10A. Interacts with DRP2. Identified in a dystroglycan complex that contains at least PRX, DRP2, UTRN, DMD and DAG1. Detected in a complex composed of at least EZR, AHNAK, PPL and PRX. Identified in a complex with EZR, AHNAK, BFSP1, BFSP2, ANK2, PLEC, VIM and spectrin. In terms of processing, the N-terminus is blocked. In terms of tissue distribution, detected in sciatic nerve and in trigeminal nerve Schwann cells. Detected in myelinating Schwann cells in sciatic nerve (at protein level).

It is found in the nucleus. The protein resides in the cytoplasm. The protein localises to the cell membrane. Its subcellular location is the cell junction. Functionally, scaffolding protein that functions as part of a dystroglycan complex in Schwann cells, and as part of EZR and AHNAK-containing complexes in eye lens fiber cells. Required for the maintenance of the peripheral myelin sheath that is essential for normal transmission of nerve impulses and normal perception of sensory stimuli. Required for normal transport of MBP mRNA from the perinuclear to the paranodal regions. Required for normal remyelination after nerve injury. Required for normal elongation of Schwann cells and normal length of the internodes between the nodes of Ranvier. The demyelinated nodes of Ranvier permit saltatory transmission of nerve impulses; shorter internodes cause slower transmission of nerve impulses. Required for the formation of appositions between the abaxonal surface of the myelin sheath and the Schwann cell plasma membrane; the Schwann cell cytoplasm is restricted to regions between these appositions. Required for the formation of Cajal bands and of Schmidt-Lanterman incisures that correspond to short, cytoplasm-filled regions on myelinated nerves. Recruits DRP2 to the Schwann cell plasma membrane. Required for normal protein composition of the eye lens fiber cell plasma membrane and normal eye lens fiber cell morphology. The polypeptide is Periaxin (Prx) (Rattus norvegicus (Rat)).